We begin with the raw amino-acid sequence, 276 residues long: Homeobox protein TOS8 (276 aa).

The segment covering 176–185 (NSVRGSNNGY) has biased composition (polar residues). The segment at 176-199 (NSVRGSNNGYSAKEKKHKAHGKRS) is disordered. The span at 189–199 (EKKHKAHGKRS) shows a compositional bias: basic residues. Residues 194–256 (AHGKRSNLPK…NARRRKIFSG (63 aa)) constitute a DNA-binding region (homeobox; TALE-type).

Belongs to the TALE/CUP9 homeobox family.

Its subcellular location is the nucleus. This Saccharomyces cerevisiae (strain ATCC 204508 / S288c) (Baker's yeast) protein is Homeobox protein TOS8 (TOS8).